The following is a 366-amino-acid chain: Cobalt-precorrin-5B C(1)-methyltransferase (366 aa).

This sequence belongs to the CbiD family.

It carries out the reaction Co-precorrin-5B + S-adenosyl-L-methionine = Co-precorrin-6A + S-adenosyl-L-homocysteine. It participates in cofactor biosynthesis; adenosylcobalamin biosynthesis; cob(II)yrinate a,c-diamide from sirohydrochlorin (anaerobic route): step 6/10. Functionally, catalyzes the methylation of C-1 in cobalt-precorrin-5B to form cobalt-precorrin-6A. The sequence is that of Cobalt-precorrin-5B C(1)-methyltransferase from Paraburkholderia phymatum (strain DSM 17167 / CIP 108236 / LMG 21445 / STM815) (Burkholderia phymatum).